The following is a 1032-amino-acid chain: Argonaute protein hrde-1 (1032 aa).

Disordered stretches follow at residues 1–51 (MADL…PIGR) and 298–375 (KLSE…YSPS). The required to recruit the small-RNA amplification machinery to gene targets and promote gene silencing stretch occupies residues 1–551 (MADLLDKIMG…IQMTAKLLPP (551 aa)). The segment covering 18–33 (PKRDNRMNQDKDEPTS) has biased composition (basic and acidic residues). A compositionally biased stretch (gly residues) spans 303–313 (KGGGGGRGGYG). 2 stretches are compositionally biased toward basic and acidic residues: residues 315 to 335 (SDSR…RDFR) and 343 to 364 (GNDR…RRDS). The 106-residue stretch at 376–481 (DAAELEHAFG…FPMELLRIAP (106 aa)) folds into the PAZ domain. Residues 650 to 977 (DILVGIAREK…LAKRGRNNYK (328 aa)) enclose the Piwi domain.

This sequence belongs to the argonaute family. WAGO subfamily. As to expression, expressed in the nuclei of male and female germ cells.

It localises to the cytoplasm. It is found in the cytoplasmic ribonucleoprotein granule. Its subcellular location is the nucleus. Argonaute protein which is involved in the endogenous small interfering RNA (endo-siRNA) pathway and is required for RNA-mediated gene silencing (RNAi) in the germline. Interacts with secondary 22G-RNAs in an hrde-2-dependent manner; 22G-RNAs are RNA-dependent RNA polymerase-derived endo-siRNAs, typically 22 nucleotides in length with a 5'-guanosine residue. Plays a key role in transgenerational epigenetic inheritance and germline immortality. May be involved in transgenerational gene silencing both by inducing subnuclear-co-localization of target genes into heterochromatin and by activation of small RNA amplification in the nuage. The polypeptide is Argonaute protein hrde-1 (Caenorhabditis elegans).